Reading from the N-terminus, the 132-residue chain is Minor structural pilin EpdB (132 aa).

Positions 1 to 4 (MSKG) are excised as a propeptide. Residues 9 to 19 (EFIVLFLALLV) carry the QXSXEXXXL motif.

The N-terminus is probably cleaved by the prepilin peptidase EppA, which recognizes the class III signal sequence.

It is found in the secreted. It localises to the cell surface. Its subcellular location is the fimbrium. Functionally, minor component of the type IV-like pili. Essential for pili formation. This Methanococcus maripaludis (strain DSM 14266 / JCM 13030 / NBRC 101832 / S2 / LL) protein is Minor structural pilin EpdB.